The primary structure comprises 30 residues: Beta-endorphin-2 (30 aa).

Tyr1 bears the N-acetyltyrosine mark.

Belongs to the POMC family.

The protein resides in the secreted. In Oncorhynchus keta (Chum salmon), this protein is Beta-endorphin-2.